The following is a 66-amino-acid chain: DNA-directed RNA polymerase subunit Rpo10 (66 aa).

Zn(2+) contacts are provided by C7, C10, C47, and C48.

It belongs to the archaeal Rpo10/eukaryotic RPB10 RNA polymerase subunit family. In terms of assembly, part of the RNA polymerase complex. Zn(2+) is required as a cofactor.

It localises to the cytoplasm. It carries out the reaction RNA(n) + a ribonucleoside 5'-triphosphate = RNA(n+1) + diphosphate. DNA-dependent RNA polymerase (RNAP) catalyzes the transcription of DNA into RNA using the four ribonucleoside triphosphates as substrates. The polypeptide is DNA-directed RNA polymerase subunit Rpo10 (Haloarcula marismortui (strain ATCC 43049 / DSM 3752 / JCM 8966 / VKM B-1809) (Halobacterium marismortui)).